The following is a 307-amino-acid chain: Nucleotide-binding protein ACP_0619 (307 aa).

Residues 1–14 show a composition bias toward basic and acidic residues; that stretch reads MPAPEPTRRAKKDA. The tract at residues 1 to 23 is disordered; that stretch reads MPAPEPTRRAKKDASASPSPAHP. 33 to 40 is an ATP binding site; the sequence is GLSGAGKG. 83-86 serves as a coordination point for GTP; it reads DVRE.

Belongs to the RapZ-like family.

Functionally, displays ATPase and GTPase activities. The polypeptide is Nucleotide-binding protein ACP_0619 (Acidobacterium capsulatum (strain ATCC 51196 / DSM 11244 / BCRC 80197 / JCM 7670 / NBRC 15755 / NCIMB 13165 / 161)).